The sequence spans 247 residues: Trypsin-2 (247 aa).

A signal peptide spans 1–15 (MNLLLILTFVAAAVA). Positions 16-23 (APFDDDDK) are cleaved as a propeptide — activation peptide. The Peptidase S1 domain maps to 24–244 (IVGGYICEEN…YVDWIKDTIA (221 aa)). Cystine bridges form between C30–C160, C48–C64, C171–C185, and C196–C220. Catalysis depends on H63, which acts as the Charge relay system. Ca(2+) is bound by residues E75, N77, V80, and E85. The Charge relay system role is filled by D107. Y154 bears the Sulfotyrosine mark. S200 serves as the catalytic Charge relay system.

The protein belongs to the peptidase S1 family. Ca(2+) is required as a cofactor. Post-translationally, sulfated on tyrosine. Sulfation at Tyr-154 increases selectivity towards basic versus apolar residues at the P2' position of inhibitors that bind in a substrate-like fashion. Although the increase in selectivity is relatively small, it may facilitate digestion of a broader range of dietary proteins. In terms of tissue distribution, expressed in Paneth cells, at the base of small intestinal crypts.

The protein resides in the secreted. The protein localises to the extracellular space. It carries out the reaction Preferential cleavage: Arg-|-Xaa, Lys-|-Xaa.. Its function is as follows. In the ileum, may be involved in defensin processing, including DEFA5. The polypeptide is Trypsin-2 (PRSS2) (Homo sapiens (Human)).